A 363-amino-acid chain; its full sequence is Histidinol-phosphate aminotransferase (363 aa).

K218 is subject to N6-(pyridoxal phosphate)lysine.

The protein belongs to the class-II pyridoxal-phosphate-dependent aminotransferase family. Histidinol-phosphate aminotransferase subfamily. In terms of assembly, homodimer. It depends on pyridoxal 5'-phosphate as a cofactor.

It catalyses the reaction L-histidinol phosphate + 2-oxoglutarate = 3-(imidazol-4-yl)-2-oxopropyl phosphate + L-glutamate. It functions in the pathway amino-acid biosynthesis; L-histidine biosynthesis; L-histidine from 5-phospho-alpha-D-ribose 1-diphosphate: step 7/9. In Xanthomonas oryzae pv. oryzae (strain MAFF 311018), this protein is Histidinol-phosphate aminotransferase.